The primary structure comprises 547 residues: Chaperonin GroEL 1 (547 aa).

ATP-binding positions include 30–33 (TLGP), Lys-51, 87–91 (DGTTT), Gly-415, and Asp-495.

This sequence belongs to the chaperonin (HSP60) family. As to quaternary structure, forms a cylinder of 14 subunits composed of two heptameric rings stacked back-to-back. Interacts with the co-chaperonin GroES.

The protein localises to the cytoplasm. It carries out the reaction ATP + H2O + a folded polypeptide = ADP + phosphate + an unfolded polypeptide.. In terms of biological role, together with its co-chaperonin GroES, plays an essential role in assisting protein folding. The GroEL-GroES system forms a nano-cage that allows encapsulation of the non-native substrate proteins and provides a physical environment optimized to promote and accelerate protein folding. This chain is Chaperonin GroEL 1, found in Rhizobium johnstonii (strain DSM 114642 / LMG 32736 / 3841) (Rhizobium leguminosarum bv. viciae).